A 283-amino-acid polypeptide reads, in one-letter code: Circadian clock oscillator protein KaiA (283 aa).

Residues 1-146 are psR domain, not required to form KaiA:KaiB:KaiC complex, or for a full KaiC phosphorylation cycle; that stretch reads MAQSTALTIC…LFRLPALKES (146 aa). Positions 3 to 163 constitute a KaiA N-terminal domain; that stretch reads QSTALTICGL…RLSQKLKERL (161 aa). The tract at residues 164–172 is flexible linker; the sequence is GYLGVYYKR. Positions 173–281 constitute a KaiA C-terminal domain; that stretch reads DTAFFFRRMS…CEMYRRSIPR (109 aa).

The protein belongs to the KaiA family. As to quaternary structure, homodimer. The KaiABC complex composition changes during the circadian cycle to control KaiC phosphorylation. Complexes KaiC(6), KaiA(2-4):KaiC(6), KaiB(6):KaiC(6) and KaiC(6):KaiB(6):KaiA(12) are among the most important forms, many form cooperatively. Binds to KaiB and KaiC, the N-terminus (pseudoreceiver domain PsR) is not required for either interaction. 1 KaiB binds to one subunit of the KaiA homodimer. KaiA and CikA bind to the same region of the KaiB(fs) form and therefore compete.

Key component of the KaiABC oscillator complex, which constitutes the main circadian regulator in cyanobacteria. Complex composition changes during the circadian cycle to control KaiC phosphorylation. KaiA stimulates KaiC autophosphorylation, while KaiB sequesters KaiA, leading to KaiC autodephosphorylation. KaiA binding to the KaiC CII domain during the subjective day yields KaiA(2-4):KaiC(6) complexes which stimulate KaiC autophosphorylation. Phospho-Ser-431 KaiC accumulation triggers binding of KaiB during the subjective night to form the KaiB(6):KaiC(6) complex, leading to changes in the output regulators CikA and SasA. KaiB(6):KaiC(6) formation exposes a site for KaiA binding on KaiB that sequesters KaiA from KaiC's CII domain, making the KaiC(6):KaiB(6):KaiA(12) complex resulting in KaiC autodephosphorylation. Complete dephosphorylation of KaiC leads to dissociation of KaiA(2):KaiB(1), completing 1 cycle of the Kai oscillator. Formation of the KaiB:KaiC complex is promoted by KaiA, helping switch KaiC from its autophosphorylation to autodephosphatase function. Its function is as follows. Binds oxidized quinones via the N-terminal PsR domain, allowing it to sense redox changes and possibly mediate clock input. This chain is Circadian clock oscillator protein KaiA, found in Thermosynechococcus vestitus (strain NIES-2133 / IAM M-273 / BP-1).